A 155-amino-acid chain; its full sequence is MKIRILSLGEKPPKWVSEGYDEYKKRLSKSIPLELIELPIAKRTKTGNPKLWMEQEAKTILTKLSDSDHLVILDVNSKIISTEELAEKMQNWKFNNPNVVILIGGPDGIDQSIKNIAKEKISISKMTFPHPLVRIIIAEQLYRAYTILEGHPYHK.

S-adenosyl-L-methionine-binding positions include L73, G104, and 123-128; that span reads ISKMTF.

This sequence belongs to the RNA methyltransferase RlmH family. Homodimer.

It localises to the cytoplasm. It carries out the reaction pseudouridine(1915) in 23S rRNA + S-adenosyl-L-methionine = N(3)-methylpseudouridine(1915) in 23S rRNA + S-adenosyl-L-homocysteine + H(+). Its function is as follows. Specifically methylates the pseudouridine at position 1915 (m3Psi1915) in 23S rRNA. This chain is Ribosomal RNA large subunit methyltransferase H, found in Francisella philomiragia subsp. philomiragia (strain ATCC 25017 / CCUG 19701 / FSC 153 / O#319-036).